A 337-amino-acid polypeptide reads, in one-letter code: Molybdate import system permease protein MolB (337 aa).

Residues methionine 1–serine 5 are Cytoplasmic-facing. The chain crosses the membrane as a helical span at residues tyrosine 6–leucine 25. Residues glycine 26–aspartate 51 are Periplasmic-facing. Residues proline 52–phenylalanine 87 form a helical membrane-spanning segment. Residues arginine 88–glycine 98 lie on the Cytoplasmic side of the membrane. Residues valine 99–phenylalanine 113 traverse the membrane as a helical segment. At glycine 114–serine 116 the chain is on the periplasmic side. Residues leucine 117–phenylalanine 140 traverse the membrane as a helical segment. The Cytoplasmic portion of the chain corresponds to lysine 141–serine 146. The chain crosses the membrane as a helical span at residues leucine 147 to isoleucine 171. At serine 172–asparagine 193 the chain is on the periplasmic side. A helical transmembrane segment spans residues tryptophan 194–leucine 214. At serine 215 to lysine 234 the chain is on the cytoplasmic side. The helical transmembrane segment at methionine 235 to serine 257 threads the bilayer. Residues glycine 258–glycine 264 lie on the Periplasmic side of the membrane. Residues leucine 265–valine 275 form a helical membrane-spanning segment. Residues glycine 276–asparagine 278 are Cytoplasmic-facing. Residues histidine 279 to leucine 304 traverse the membrane as a helical segment. Residues serine 305–proline 310 lie on the Periplasmic side of the membrane. Residues isoleucine 311–lysine 329 traverse the membrane as a helical segment. The Cytoplasmic segment spans residues leucine 330–glutamate 337.

Belongs to the binding-protein-dependent transport system permease family. FecCD subfamily. As to quaternary structure, the complex is composed of two ATP-binding proteins (MolC), two transmembrane proteins (MolB) and a solute-binding protein (MolA).

Its subcellular location is the cell inner membrane. The MolBCA complex shows a decrease in affinity in the presence of increasing concentrations of substrate and nucleotide. Its function is as follows. Part of the ABC transporter complex MolBCA involved in molybdate import. Responsible for the translocation of the substrate across the membrane. Functions as a low-affinity molybdate transporter. The sequence is that of Molybdate import system permease protein MolB from Haemophilus influenzae (strain ATCC 51907 / DSM 11121 / KW20 / Rd).